Here is a 438-residue protein sequence, read N- to C-terminus: MRVFIDEIARHVDQEVELRGWLYQRRSKGKIHFLILRDGTGFLQATVVQGEVPEAVFREADHLPQETALRVWGRVREDRRAPGGFELAVRDLQVVSRPQGEYPIGPKEHGIDFLMDHRHLWLRHRRPFAVMRIRDELERAIHEFFGERGFLRFDAPILTPSAVEGTTELFEVELFDGEKAYLSQSGQLYAEAGALAFAKVYTFGPTFRAERSKTRRHLLEFWMVEPEVAFMTHEENMALQEELVSFLVARVLERRSRELEMLGRDPKALEPAAEGHYPRLTYKEAVALVNRIAQEDPEVPPLPYGEDFGAPHEAALSRRFDRPVFVERYPARIKAFYMEPDPEDPELVLNDDLLAPEGYGEIIGGSQRIHDLELLRRKIQEFGLPEEVYDWYLDLRRFGSVPHSGFGLGLERTVAWICGLAHVREAIPFPRMYTRMRP.

Belongs to the class-II aminoacyl-tRNA synthetase family. In terms of assembly, homodimer.

It is found in the cytoplasm. It catalyses the reaction tRNA(Asn) + L-asparagine + ATP = L-asparaginyl-tRNA(Asn) + AMP + diphosphate + H(+). The chain is Asparagine--tRNA ligase from Thermus thermophilus (strain ATCC 27634 / DSM 579 / HB8).